The chain runs to 334 residues: Glyceraldehyde-3-phosphate dehydrogenase (334 aa).

NAD(+) contacts are provided by residues 12–13 (TI) and Gly-111. 140-142 (SCN) serves as a coordination point for D-glyceraldehyde 3-phosphate. Cys-141 serves as the catalytic Nucleophile. Arg-167 contributes to the NAD(+) binding site. 192–193 (HG) is a D-glyceraldehyde 3-phosphate binding site. Gln-298 provides a ligand contact to NAD(+).

The protein belongs to the glyceraldehyde-3-phosphate dehydrogenase family. In terms of assembly, homotetramer.

The protein localises to the encapsulin nanocompartment. It catalyses the reaction D-glyceraldehyde 3-phosphate + phosphate + NADP(+) = (2R)-3-phospho-glyceroyl phosphate + NADPH + H(+). It carries out the reaction D-glyceraldehyde 3-phosphate + phosphate + NAD(+) = (2R)-3-phospho-glyceroyl phosphate + NADH + H(+). It functions in the pathway carbohydrate degradation; glycolysis; pyruvate from D-glyceraldehyde 3-phosphate: step 1/5. Its function is as follows. Possible cargo protein of a type 4B encapsulin nanocompartment. Active in the presence of NAD and NADP, prefers NADP. The chain is Glyceraldehyde-3-phosphate dehydrogenase (gap) from Pyrococcus furiosus (strain ATCC 43587 / DSM 3638 / JCM 8422 / Vc1).